Here is a 398-residue protein sequence, read N- to C-terminus: Protein trichome birefringence-like 45 (398 aa).

Residues 1–21 (MAAVQCLTFLFLFLLQNATSA) form a helical; Signal-anchor for type II membrane protein membrane-spanning segment. The short motif at 131–133 (GDS) is the GDS motif element. The short motif at 375-389 (DCSHWCLPGLPDTWN) is the DCXHWCLPGXXDXWN motif element.

The protein belongs to the PC-esterase family. TBL subfamily.

Its subcellular location is the membrane. In terms of biological role, may act as a bridging protein that binds pectin and other cell wall polysaccharides. Probably involved in maintaining esterification of pectins. May be involved in the specific O-acetylation of cell wall polymers. This is Protein trichome birefringence-like 45 (TBL45) from Arabidopsis thaliana (Mouse-ear cress).